The primary structure comprises 340 residues: Anthranilate phosphoribosyltransferase (340 aa).

5-phospho-alpha-D-ribose 1-diphosphate contacts are provided by residues glycine 82, 85–86, threonine 90, 92–95, 110–118, and alanine 122; these read GD, NISS, and KHGGRSVSS. Glycine 82 contacts anthranilate. Serine 94 contacts Mg(2+). Arginine 168 contacts anthranilate. 2 residues coordinate Mg(2+): aspartate 227 and glutamate 228.

It belongs to the anthranilate phosphoribosyltransferase family. Homodimer. Mg(2+) serves as cofactor.

It catalyses the reaction N-(5-phospho-beta-D-ribosyl)anthranilate + diphosphate = 5-phospho-alpha-D-ribose 1-diphosphate + anthranilate. The protein operates within amino-acid biosynthesis; L-tryptophan biosynthesis; L-tryptophan from chorismate: step 2/5. In terms of biological role, catalyzes the transfer of the phosphoribosyl group of 5-phosphorylribose-1-pyrophosphate (PRPP) to anthranilate to yield N-(5'-phosphoribosyl)-anthranilate (PRA). This chain is Anthranilate phosphoribosyltransferase, found in Dechloromonas aromatica (strain RCB).